Here is a 142-residue protein sequence, read N- to C-terminus: Large-conductance mechanosensitive channel (142 aa).

3 helical membrane-spanning segments follow: residues 14-34 (VVDL…VNSL), 38-58 (VIMP…YYIP), and 82-102 (GQFL…FMVI).

It belongs to the MscL family. In terms of assembly, homopentamer.

It localises to the cell inner membrane. Channel that opens in response to stretch forces in the membrane lipid bilayer. May participate in the regulation of osmotic pressure changes within the cell. This is Large-conductance mechanosensitive channel from Methylorubrum populi (strain ATCC BAA-705 / NCIMB 13946 / BJ001) (Methylobacterium populi).